The chain runs to 167 residues: NADH-ubiquinone oxidoreductase chain 6 (167 aa).

The next 4 membrane-spanning stretches (helical) occupy residues 5–25 (IIML…TIYL), 34–54 (MLLI…FTMC), 60–80 (LILM…SYFI), and 138–158 (FFIM…ITYI).

This sequence belongs to the complex I subunit 6 family.

The protein localises to the mitochondrion membrane. It carries out the reaction a ubiquinone + NADH + 5 H(+)(in) = a ubiquinol + NAD(+) + 4 H(+)(out). In terms of biological role, core subunit of the mitochondrial membrane respiratory chain NADH dehydrogenase (Complex I) that is believed to belong to the minimal assembly required for catalysis. Complex I functions in the transfer of electrons from NADH to the respiratory chain. The immediate electron acceptor for the enzyme is believed to be ubiquinone. The polypeptide is NADH-ubiquinone oxidoreductase chain 6 (ND6) (Apis mellifera ligustica (Common honeybee)).